The primary structure comprises 296 residues: Acetaldehyde dehydrogenase (296 aa).

An NAD(+)-binding site is contributed by 15 to 18 (SGNI). Residue Cys-132 is the Acyl-thioester intermediate of the active site. NAD(+)-binding positions include 164-172 (SAGPATRAN) and Asn-274.

Belongs to the acetaldehyde dehydrogenase family. Interacts with MhpE.

The enzyme catalyses acetaldehyde + NAD(+) + CoA = acetyl-CoA + NADH + H(+). Its pathway is aromatic compound metabolism; 3-phenylpropanoate degradation. Functionally, catalyzes the conversion of acetaldehyde to acetyl-CoA, using NAD(+) and coenzyme A. Is the final enzyme in the meta-cleavage pathway for the degradation of aromatic compounds. The chain is Acetaldehyde dehydrogenase from Pectobacterium atrosepticum (strain SCRI 1043 / ATCC BAA-672) (Erwinia carotovora subsp. atroseptica).